The sequence spans 741 residues: 1,4-alpha-glucan branching enzyme GlgB (741 aa).

The Nucleophile role is filled by aspartate 420. Catalysis depends on glutamate 473, which acts as the Proton donor.

It belongs to the glycosyl hydrolase 13 family. GlgB subfamily. Monomer.

The enzyme catalyses Transfers a segment of a (1-&gt;4)-alpha-D-glucan chain to a primary hydroxy group in a similar glucan chain.. The protein operates within glycan biosynthesis; glycogen biosynthesis. Its function is as follows. Catalyzes the formation of the alpha-1,6-glucosidic linkages in glycogen by scission of a 1,4-alpha-linked oligosaccharide from growing alpha-1,4-glucan chains and the subsequent attachment of the oligosaccharide to the alpha-1,6 position. The sequence is that of 1,4-alpha-glucan branching enzyme GlgB from Pseudomonas syringae pv. tomato (strain ATCC BAA-871 / DC3000).